A 345-amino-acid chain; its full sequence is Glycerol-3-phosphate dehydrogenase [NAD(P)+] (345 aa).

NADPH is bound by residues Ser23, Tyr24, His44, and Lys118. Sn-glycerol 3-phosphate is bound by residues Lys118, Gly147, and Thr149. Residue Ala151 participates in NADPH binding. 5 residues coordinate sn-glycerol 3-phosphate: Lys203, Asp256, Ser266, Arg267, and Asn268. Lys203 (proton acceptor) is an active-site residue. Arg267 is an NADPH binding site. Residues Val291 and Glu293 each contribute to the NADPH site.

Belongs to the NAD-dependent glycerol-3-phosphate dehydrogenase family.

The protein resides in the cytoplasm. The enzyme catalyses sn-glycerol 3-phosphate + NAD(+) = dihydroxyacetone phosphate + NADH + H(+). It carries out the reaction sn-glycerol 3-phosphate + NADP(+) = dihydroxyacetone phosphate + NADPH + H(+). The protein operates within membrane lipid metabolism; glycerophospholipid metabolism. In terms of biological role, catalyzes the reduction of the glycolytic intermediate dihydroxyacetone phosphate (DHAP) to sn-glycerol 3-phosphate (G3P), the key precursor for phospholipid synthesis. The polypeptide is Glycerol-3-phosphate dehydrogenase [NAD(P)+] (Vibrio campbellii (strain ATCC BAA-1116)).